Reading from the N-terminus, the 493-residue chain is Glutamyl-tRNA(Gln) amidotransferase subunit A (493 aa).

Active-site charge relay system residues include Lys78 and Ser158. Residue Ser182 is the Acyl-ester intermediate of the active site.

Belongs to the amidase family. GatA subfamily. As to quaternary structure, heterotrimer of A, B and C subunits.

It catalyses the reaction L-glutamyl-tRNA(Gln) + L-glutamine + ATP + H2O = L-glutaminyl-tRNA(Gln) + L-glutamate + ADP + phosphate + H(+). Functionally, allows the formation of correctly charged Gln-tRNA(Gln) through the transamidation of misacylated Glu-tRNA(Gln) in organisms which lack glutaminyl-tRNA synthetase. The reaction takes place in the presence of glutamine and ATP through an activated gamma-phospho-Glu-tRNA(Gln). The protein is Glutamyl-tRNA(Gln) amidotransferase subunit A of Rickettsia bellii (strain RML369-C).